We begin with the raw amino-acid sequence, 673 residues long: UvrABC system protein B (673 aa).

In terms of domain architecture, Helicase ATP-binding spans 30 to 417 (NSILLGNKYQ…SSVVVDQIIR (388 aa)). Residue 43 to 50 (GVTGSGKT) coordinates ATP. Residues 96–119 (YYDYYQPESYVPSKDLFIEKEATI) carry the Beta-hairpin motif. In terms of domain architecture, Helicase C-terminal spans 434–600 (QMEDLYSEIQ…TIVKKIQNIL (167 aa)). A UVR domain is found at 627–662 (KKLIDKLKFDLEEAVNDERFEDAIVLRDKIKELSSK).

Belongs to the UvrB family. Forms a heterotetramer with UvrA during the search for lesions. Interacts with UvrC in an incision complex.

The protein localises to the cytoplasm. Its function is as follows. The UvrABC repair system catalyzes the recognition and processing of DNA lesions. A damage recognition complex composed of 2 UvrA and 2 UvrB subunits scans DNA for abnormalities. Upon binding of the UvrA(2)B(2) complex to a putative damaged site, the DNA wraps around one UvrB monomer. DNA wrap is dependent on ATP binding by UvrB and probably causes local melting of the DNA helix, facilitating insertion of UvrB beta-hairpin between the DNA strands. Then UvrB probes one DNA strand for the presence of a lesion. If a lesion is found the UvrA subunits dissociate and the UvrB-DNA preincision complex is formed. This complex is subsequently bound by UvrC and the second UvrB is released. If no lesion is found, the DNA wraps around the other UvrB subunit that will check the other stand for damage. This Borreliella burgdorferi (strain ATCC 35210 / DSM 4680 / CIP 102532 / B31) (Borrelia burgdorferi) protein is UvrABC system protein B.